Reading from the N-terminus, the 185-residue chain is GTP cyclohydrolase 1 (185 aa).

Residues Cys75, His78, and Cys146 each contribute to the Zn(2+) site.

This sequence belongs to the GTP cyclohydrolase I family. In terms of assembly, toroid-shaped homodecamer, composed of two pentamers of five dimers.

It carries out the reaction GTP + H2O = 7,8-dihydroneopterin 3'-triphosphate + formate + H(+). The protein operates within cofactor biosynthesis; 7,8-dihydroneopterin triphosphate biosynthesis; 7,8-dihydroneopterin triphosphate from GTP: step 1/1. This is GTP cyclohydrolase 1 from Methylococcus capsulatus (strain ATCC 33009 / NCIMB 11132 / Bath).